We begin with the raw amino-acid sequence, 535 residues long: MGSSATEIEELENTTFKYLTGEQTEKMWQRLKGILRCLVKQLERGDVNVVDLKKNIEYAASVLEAVYIDETRRLLDTEDELSDIQTDSVPSEVRDWLASTFTRKMGMTKKKPEEKPKFRSIVHAVQAGIFVERMYRKTYHMVGLAYPAAVIVTLKDVDKWSFDVFALNEASGEHSLKFMIYELFTRYDLINRFKIPVSCLITFAEALEVGYSKYKNPYHNLIHAADVTQTVHYIMLHTGIMHWLTELEILAMVFAAAIHDYEHTGTTNNFHIQTRSDVAILYNDRSVLENHHVSAAYRLMQEEEMNILINLSKDDWRDLRNLVIEMVLSTDMSGHFQQIKNIRNSLQQPEGIDRAKTMSLILHAADISHPAKSWKLHYRWTMALMEEFFLQGDKEAELGLPFSPLCDRKSTMVAQSQIGFIDFIVEPTFSLLTDSTEKIVIPLIEEASKAETSSYVASSSTTIVGLHIADALRRSNTKGSMSDGSYSPDYSLAAVDLKSFKNNLVDIIQQNKERWKELAAQEARTSSQKCEFIHQ.

Calmodulin-binding stretches follow at residues 24–44 (TEKM…QLER) and 114–137 (EKPK…MYRK). The region spanning 142-522 (VGLAYPAAVI…ERWKELAAQE (381 aa)) is the PDEase domain. Histidine 219 acts as the Proton donor in catalysis. Zn(2+)-binding residues include histidine 223, histidine 259, aspartate 260, and aspartate 366. Aspartate 260 is a binding site for Mg(2+).

It belongs to the cyclic nucleotide phosphodiesterase family. PDE1 subfamily. Homodimer. Interacts with YWHAZ. It depends on Zn(2+) as a cofactor. Requires Mg(2+) as cofactor. In terms of tissue distribution, several tissues, including brain, kidney, testes and heart.

It carries out the reaction a nucleoside 3',5'-cyclic phosphate + H2O = a nucleoside 5'-phosphate + H(+). It catalyses the reaction 3',5'-cyclic GMP + H2O = GMP + H(+). The catalysed reaction is 3',5'-cyclic AMP + H2O = AMP + H(+). With respect to regulation, type I PDE are activated by the binding of calmodulin in the presence of Ca(2+). Calcium/calmodulin-dependent cyclic nucleotide phosphodiesterase with a dual specificity for the second messengers cGMP and cAMP, which are key regulators of many important physiological processes. Has a higher efficiency with cGMP compared to cAMP. This chain is Dual specificity calcium/calmodulin-dependent 3',5'-cyclic nucleotide phosphodiesterase 1A, found in Homo sapiens (Human).